Consider the following 429-residue polypeptide: Phosphomethylpyrimidine synthase (429 aa).

Substrate is bound by residues asparagine 66, methionine 95, tyrosine 124, histidine 163, 185–187, 226–229, and glutamate 265; these read SRG and DGLR. Histidine 269 contributes to the Zn(2+) binding site. Tyrosine 292 is a substrate binding site. Histidine 333 is a binding site for Zn(2+). Residues cysteine 409, cysteine 412, and cysteine 416 each contribute to the [4Fe-4S] cluster site.

This sequence belongs to the ThiC family. It depends on [4Fe-4S] cluster as a cofactor.

The catalysed reaction is 5-amino-1-(5-phospho-beta-D-ribosyl)imidazole + S-adenosyl-L-methionine = 4-amino-2-methyl-5-(phosphooxymethyl)pyrimidine + CO + 5'-deoxyadenosine + formate + L-methionine + 3 H(+). Its pathway is cofactor biosynthesis; thiamine diphosphate biosynthesis. Functionally, catalyzes the synthesis of the hydroxymethylpyrimidine phosphate (HMP-P) moiety of thiamine from aminoimidazole ribotide (AIR) in a radical S-adenosyl-L-methionine (SAM)-dependent reaction. In Carboxydothermus hydrogenoformans (strain ATCC BAA-161 / DSM 6008 / Z-2901), this protein is Phosphomethylpyrimidine synthase.